A 350-amino-acid chain; its full sequence is Salicylate decarboxylase (350 aa).

This sequence belongs to the metallo-dependent hydrolases superfamily. In terms of assembly, homotetramer.

The enzyme catalyses salicylate + H(+) = phenol + CO2. Its activity is regulated as follows. Inhibited by AgNO(3), HgCl(2), p-chloromercuribenzoic acid and NiCl(2). Reversibly catalyzes the regioselective carboxylation of phenol to form salicylic acid. Involved in a pathway for the degradation of salicylate via phenol. Also catalyzes the decarboxylation of beta-resorcylic acid (2,4-dihydroxybenzoic acid) into resorcinol (1,3-dihydroxybenzene), gamma-resorcylic acid (2,6-dihydroxybenzoic acid) into resorcinol, 2,3-dihydroxybenzoic acid into catechol (1,2-dihydroxybenzene), and 4-aminosalicylic acid into 3-aminophenol. The polypeptide is Salicylate decarboxylase (Cutaneotrichosporon moniliiforme (Yeast)).